The chain runs to 330 residues: DNA-directed RNA polymerase subunit alpha (330 aa).

Residues 1–236 (MQNSVIEFLK…EQLEAFIDLR (236 aa)) form an alpha N-terminal domain (alpha-NTD) region. The tract at residues 250–330 (FDPILLRLVD…NWPPTNILDN (81 aa)) is alpha C-terminal domain (alpha-CTD).

It belongs to the RNA polymerase alpha chain family. In terms of assembly, homodimer. The RNAP catalytic core consists of 2 alpha, 1 beta, 1 beta' and 1 omega subunit. When a sigma factor is associated with the core the holoenzyme is formed, which can initiate transcription.

The catalysed reaction is RNA(n) + a ribonucleoside 5'-triphosphate = RNA(n+1) + diphosphate. Functionally, DNA-dependent RNA polymerase catalyzes the transcription of DNA into RNA using the four ribonucleoside triphosphates as substrates. The protein is DNA-directed RNA polymerase subunit alpha of Blochmanniella pennsylvanica (strain BPEN).